We begin with the raw amino-acid sequence, 127 residues long: DNA-directed RNA polymerase subunit omega (127 aa).

The protein belongs to the RNA polymerase subunit omega family. As to quaternary structure, the RNAP catalytic core consists of 2 alpha, 1 beta, 1 beta' and 1 omega subunit. When a sigma factor is associated with the core the holoenzyme is formed, which can initiate transcription.

It carries out the reaction RNA(n) + a ribonucleoside 5'-triphosphate = RNA(n+1) + diphosphate. In terms of biological role, promotes RNA polymerase assembly. Latches the N- and C-terminal regions of the beta' subunit thereby facilitating its interaction with the beta and alpha subunits. The chain is DNA-directed RNA polymerase subunit omega from Rickettsia typhi (strain ATCC VR-144 / Wilmington).